The primary structure comprises 360 residues: POU domain, class 5, transcription factor 1 (360 aa).

Disordered regions lie at residues 1-51 (MAGH…GPGV) and 88-114 (GGLETSQPEGEAGVGVESNSDGASPEP). The short motif at 4-12 (HLTSDFAFS) is the 9aaTAD element. Serine 111 carries the post-translational modification Phosphoserine; by MAPK. Residue lysine 123 forms a Glycyl lysine isopeptide (Lys-Gly) (interchain with G-Cter in SUMO) linkage. The POU-specific domain occupies 138 to 212 (DIKALQKELE…LLQKWVEEAD (75 aa)). Positions 157 and 164 each coordinate DNA. DNA-binding stretches follow at residues 180–186 (SQTTICR) and 193–196 (SFKN). Residues 230-289 (RKRKRTSIENRVRGNLENLFLQCPKPTLQQISHIAQQLGLEKDVVRVWFCNRRQKGKRSS) constitute a DNA-binding region (homeobox). Threonine 235 carries the post-translational modification Phosphothreonine. Serine 236, serine 289, serine 290, and serine 355 each carry phosphoserine.

It belongs to the POU transcription factor family. Class-5 subfamily. Interacts with PKM. Interacts with WWP2. Interacts with UBE2I and ZSCAN10. Interacts with PCGF1. Interacts with ESRRB; recruits ESRRB near the POU5F1-SOX2 element in the NANOG proximal promoter; the interaction is DNA independent. Interacts with ZNF322. Interacts with MAPK8 and MAPK9; the interaction allows MAPK8 and MAPK9 to phosphorylate POU5F1 on Ser-355. Interacts (when phosphorylated on Ser-355) with FBXW8. Interacts with FBXW4. Interacts with SOX2 and SOX15; binds synergistically with either SOX2 or SOX15 to DNA. Interacts with DDX56. Sumoylation enhances the protein stability, DNA binding and transactivation activity. Sumoylation is required for enhanced YES1 expression. Post-translationally, ubiquitinated; undergoes 'Lys-63'-linked polyubiquitination by WWP2 leading to proteasomal degradation. In terms of processing, ERK1/2-mediated phosphorylation at Ser-111 promotes nuclear exclusion and proteasomal degradation. Phosphorylation at Thr-235 and Ser-236 decrease DNA-binding and alters ability to activate transcription.

The protein localises to the cytoplasm. It is found in the nucleus. In terms of biological role, transcription factor that binds to the octamer motif (5'-ATTTGCAT-3'). Forms a trimeric complex with SOX2 or SOX15 on DNA and controls the expression of a number of genes involved in embryonic development such as YES1, FGF4, UTF1 and ZFP206. Critical for early embryogenesis and for embryonic stem cell pluripotency. This is POU domain, class 5, transcription factor 1 (POU5F1) from Pan troglodytes (Chimpanzee).